Consider the following 122-residue polypeptide: MIQPQTHLNVADNSGARELMCIRIIGASNRRYAHIGDVIVAVIKEAVPHMPLQRSEVIRAVIVRTRKELKRDNGMIIQYDDNAAVVIDQEGNPRGTRVFGAIARELRQLNFTKIVSLAPEVL.

The protein belongs to the universal ribosomal protein uL14 family. As to quaternary structure, part of the 50S ribosomal subunit.

The protein localises to the plastid. It is found in the chloroplast. Binds to 23S rRNA. This chain is Large ribosomal subunit protein uL14c, found in Nandina domestica (Heavenly bamboo).